The following is a 76-amino-acid chain: Theta defensin subunit B (76 aa).

The signal sequence occupies residues 1–22; that stretch reads MRTFALLTAMLLLVALQPQAEA. A propeptide spanning residues 23–64 is cleaved from the precursor; it reads RQARADEAAAQQQPGADDQGMAHSFTRPENAALPLSESAKGL. The disordered stretch occupies residues 24-54; the sequence is QARADEAAAQQQPGADDQGMAHSFTRPENAA. Over residues 30–44 the composition is skewed to low complexity; the sequence is AAAQQQPGADDQGMA. Residue Arg65 forms a Cyclopeptide (Arg-Cys) (interchain with C-73 in subunit A); in form BTD-1 linkage. A Cyclopeptide (Arg-Cys) (interchain with C-73 in subunit B); in form BTD-2 cross-link involves residue Arg65. Cys68 and Cys73 are disulfide-bonded. Residue Cys73 forms a Cyclopeptide (Cys-Arg) (interchain with R-65 in subunit A); in form BTD-1 linkage. Cys73 participates in a covalent cross-link: Cyclopeptide (Cys-Arg) (interchain with R-65 in subunit B); in form BTD-2. The propeptide occupies 74-76; the sequence is QLL.

This sequence belongs to the alpha-defensin family. Theta subfamily. In terms of assembly, BTD-1 is a cyclic heterodimer composed of subunits A and B; disulfide-linked. BTD-2 is a cyclic homodimer composed of two subunits B; disulfide-linked. Forms a cyclic peptide with subunit A (BTD-1), or subunit B (BTD-2). An additional intersubunit disulfide bond is formed.

Functionally, BTD-1 and BTD-2 have antimicrobial activity against the Gram-negative bacterium E.coli ML35, the Gram-positive bacterium S.aureus 502a, and the fungus C.albicans 16820. BTD-2 is more effective against E.coli than BTD-1. In Papio anubis (Olive baboon), this protein is Theta defensin subunit B (BTDB).